The primary structure comprises 48 residues: Large ribosomal subunit protein bL33B (48 aa).

It belongs to the bacterial ribosomal protein bL33 family.

The sequence is that of Large ribosomal subunit protein bL33B (rpmG 2) from Mycoplasmoides gallisepticum (strain R(low / passage 15 / clone 2)) (Mycoplasma gallisepticum).